Reading from the N-terminus, the 477-residue chain is Diphthine methyltransferase (477 aa).

WD repeat units lie at residues 194–232 (HFEAWIAAFNYWQTELVYSGGDDCLLRGWDTRMLGTPVF), 236–276 (RHCM…QPLA), and 422–464 (VKTR…ARTL).

This sequence belongs to the DPH7 family. Interacts with INCA1.

It catalyses the reaction diphthine methyl ester-[translation elongation factor 2] + H2O = diphthine-[translation elongation factor 2] + methanol + H(+). Its pathway is protein modification; peptidyl-diphthamide biosynthesis. Functionally, catalyzes the demethylation of diphthine methyl ester to form diphthine, an intermediate diphthamide biosynthesis, a post-translational modification of histidine which occurs in translation elongation factor 2 (EEF2). This is Diphthine methyltransferase (Dph7) from Mus musculus (Mouse).